A 430-amino-acid chain; its full sequence is Serine--tRNA ligase (430 aa).

236-238 provides a ligand contact to L-serine; that stretch reads TAE. An ATP-binding site is contributed by 267–269; sequence RSE. An L-serine-binding site is contributed by Glu-290. ATP is bound at residue 354-357; sequence EISS. Position 390 (Ser-390) interacts with L-serine.

It belongs to the class-II aminoacyl-tRNA synthetase family. Type-1 seryl-tRNA synthetase subfamily. In terms of assembly, homodimer. The tRNA molecule binds across the dimer.

Its subcellular location is the cytoplasm. It carries out the reaction tRNA(Ser) + L-serine + ATP = L-seryl-tRNA(Ser) + AMP + diphosphate + H(+). The enzyme catalyses tRNA(Sec) + L-serine + ATP = L-seryl-tRNA(Sec) + AMP + diphosphate + H(+). It participates in aminoacyl-tRNA biosynthesis; selenocysteinyl-tRNA(Sec) biosynthesis; L-seryl-tRNA(Sec) from L-serine and tRNA(Sec): step 1/1. Functionally, catalyzes the attachment of serine to tRNA(Ser). Is also able to aminoacylate tRNA(Sec) with serine, to form the misacylated tRNA L-seryl-tRNA(Sec), which will be further converted into selenocysteinyl-tRNA(Sec). The sequence is that of Serine--tRNA ligase from Idiomarina loihiensis (strain ATCC BAA-735 / DSM 15497 / L2-TR).